The sequence spans 196 residues: tRNA (pseudouridine(54)-N(1))-methyltransferase (196 aa).

Leucine 126 is an S-adenosyl-L-methionine binding site.

It belongs to the methyltransferase superfamily. TrmY family. Homodimer.

Its subcellular location is the cytoplasm. It carries out the reaction pseudouridine(54) in tRNA + S-adenosyl-L-methionine = N(1)-methylpseudouridine(54) in tRNA + S-adenosyl-L-homocysteine + H(+). Functionally, specifically catalyzes the N1-methylation of pseudouridine at position 54 (Psi54) in tRNAs. This chain is tRNA (pseudouridine(54)-N(1))-methyltransferase, found in Halobacterium salinarum (strain ATCC 700922 / JCM 11081 / NRC-1) (Halobacterium halobium).